Reading from the N-terminus, the 335-residue chain is Homeobox protein DBX1 (335 aa).

Disordered regions lie at residues Arg56–Ala102 and Lys240–Ser335. The span at Gly83–Pro95 shows a compositional bias: low complexity. The homeobox DNA-binding region spans Gly181 to Lys240. Low complexity predominate over residues Gly299–Phe317. Acidic residues predominate over residues Ser318–Ser335.

It belongs to the H2.0 homeobox family.

The protein resides in the nucleus. Its function is as follows. Could have a role in patterning the central nervous system during embryogenesis. Has a key role in regulating the distinct phenotypic features that distinguish two major classes of ventral interneurons, V0 and V1 neurons. Regulates the transcription factor profile, neurotransmitter phenotype, intraspinal migratory path and axonal trajectory of V0 neurons, features that differentiate them from an adjacent set of V1 neurons. In Rattus norvegicus (Rat), this protein is Homeobox protein DBX1 (Dbx1).